Consider the following 457-residue polypeptide: MELTAVLLLLGLCSAGTVLGSEHETRLVAKLFKDYSSVVRPVGDHREIVQVTVGLQLIQLINVDEVNQIVTTNVRLKQQWVDYNLKWNPDDYGGVKKIHIPSEKIWRPDVVLYNNADGDFAIVKFTKVLLDYTGHITWTPPAIFKSYCEIIVTHFPFDEQNCSMKLGTWTYDGSVVAINPESDQPDLSNFMESGEWVIKEARGWKHWVFYSCCPNTPYLDITYHFVMQRLPLYFIVNVIIPCLLFSFLTSLVFYLPTDSGEKMTLSISVLLSLTVFLLVIVELIPSTSSAVPLIGKYMLFTMVFVIASIIITVIVINTHHRSPSTHIMPEWVRKVFIDTIPNIMFFSTMKRPSRDKQEKRIFTEDIDISDISGKPGPPPMGFHSPLIKHPEVKSAIEGVKYIAETMKSDQESNNASEEWKYVAMVMDHILLGVFMLVCLIGTLAVFAGRLIELHQQG.

The signal sequence occupies residues 1-20 (MELTAVLLLLGLCSAGTVLG). The Extracellular segment spans residues 21 to 230 (SEHETRLVAK…ITYHFVMQRL (210 aa)). 2 disulfide bridges follow: C148–C162 and C212–C213. N161 carries an N-linked (GlcNAc...) asparagine glycan. The next 3 membrane-spanning stretches (helical) occupy residues 231-255 (PLYF…VFYL), 263-281 (MTLS…LVIV), and 297-316 (YMLF…VIVI). The Cytoplasmic portion of the chain corresponds to 317–428 (NTHHRSPSTH…WKYVAMVMDH (112 aa)). A helical transmembrane segment spans residues 429–447 (ILLGVFMLVCLIGTLAVFA).

Belongs to the ligand-gated ion channel (TC 1.A.9) family. Acetylcholine receptor (TC 1.A.9.1) subfamily. Alpha-1/CHRNA1 sub-subfamily. As to quaternary structure, one of the alpha chains that assemble within the acetylcholine receptor, a pentamer of two alpha chains, a beta, a delta, and a gamma (in immature muscle) or epsilon (in mature muscle) chains. The muscle heteropentamer composed of alpha-1, beta-1, delta, epsilon subunits interacts with the alpha-conotoxin ImII.

It localises to the postsynaptic cell membrane. Its subcellular location is the cell membrane. It carries out the reaction K(+)(in) = K(+)(out). It catalyses the reaction Na(+)(in) = Na(+)(out). Functionally, upon acetylcholine binding, the AChR responds by an extensive change in conformation that affects all subunits and leads to opening of an ion-conducting channel across the plasma membrane. This chain is Acetylcholine receptor subunit alpha (Chrna1), found in Rattus norvegicus (Rat).